A 490-amino-acid polypeptide reads, in one-letter code: Subtilisin-like protease 8 (490 aa).

Positions Met1–Gln26 are cleaved as a signal peptide. Residues Asp27–Ala134 constitute a propeptide that is removed on maturation. Residues Ser43 to Arg133 form the Inhibitor I9 domain. The 307-residue stretch at Pro144–Val450 folds into the Peptidase S8 domain. Residues Asp180 and His212 each act as charge relay system in the active site. The N-linked (GlcNAc...) asparagine glycan is linked to Asn282. Ser378 (charge relay system) is an active-site residue. The N-linked (GlcNAc...) asparagine glycan is linked to Asn455.

The protein belongs to the peptidase S8 family.

It localises to the secreted. In terms of biological role, secreted subtilisin-like serine protease with keratinolytic activity that contributes to pathogenicity. The polypeptide is Subtilisin-like protease 8 (SUB8) (Arthroderma otae (strain ATCC MYA-4605 / CBS 113480) (Microsporum canis)).